The primary structure comprises 839 residues: Phenylalanine--tRNA ligase beta subunit (839 aa).

A tRNA-binding domain is found at 42–166 (GELTGPIVIG…PPSVEGHQLV (125 aa)). A B5 domain is found at 421–496 (PEMPRQTINA…RKIGFDRIKA (76 aa)). Positions 474, 480, 483, and 484 each coordinate Mg(2+). Residues 745-838 (SSFPVAKEDV…AEETCGAQLR (94 aa)) form the FDX-ACB domain.

Belongs to the phenylalanyl-tRNA synthetase beta subunit family. Type 1 subfamily. In terms of assembly, tetramer of two alpha and two beta subunits. Mg(2+) is required as a cofactor.

The protein resides in the cytoplasm. The enzyme catalyses tRNA(Phe) + L-phenylalanine + ATP = L-phenylalanyl-tRNA(Phe) + AMP + diphosphate + H(+). The chain is Phenylalanine--tRNA ligase beta subunit from Cutibacterium acnes (strain DSM 16379 / KPA171202) (Propionibacterium acnes).